A 2963-amino-acid chain; its full sequence is MIPIYLRQKLISYALIYLVAIQPIMPVMAAGIDVAQGSTALDKAGNGVPVVNIAPPNSAGVSHNVYNQFNVGSEGVILNNATDRLTQTQLGGLIQSNANLNGKAAGAIINEVVSANRSQLNGYLEVGGKAAAVMVANPYGITCDGCGFINTPNVTLTTGKPMMDTNGKLQSLDVTQGAISIQGKGLDASQSSALSLISRANEINAQIHAQDLTVIAGSNRVDSAGHVSERQGQGDVPQVSIDTGALGGMYANRIRLVSSEKGVGVNLGNLNARQGDIQLDSKGKLTVNNAVAHGDIIASADQLHLQGHQRAQGNITLNSHGESRLDNATLLAGDTLAVKAGGKITSKESQLNAGVDSAGNIGEKGTVSLQGSELALQQSHVAAAAVSVVSSGDIVQDKESSLTARQLKLSGQHLELAGQLAANNDLSITGQSLRGSKTASVGSQKNITFNLAGDSEWAGQMVAGNDLIFSGQSLTNHGQLLAANQMHFEGLGLDNQGQILAADINIAVHRLNNQGQLQGDKSLLLTADSLVQSTRGTMNSGRALTLRAAEMDISGDLQSQILDVKGDNWHNHGNVVAQEHAQLRLGHTIDNRGVLVSAGDMDLSFNQLSNQGRILGAELALSGKNISNSGQLVGKQQLSLQLDEGYQGTSSGELKSDGLLSVTADEINNQGHWESGSLNTTAQQLTNNGKVLSVGSQNINLSGSLTNQQLGQFLTDGEFIIVAEQVINSGLLQGNQAVTLNGLKQYQGGTGSQLLTKGVGEIHSDSVNNAGLIQAGSLSLTGEVLDNTGTLSGLSTLHIDSHNEIINQARGQLLSDNTIKLDSEQLVNNGLMQGTELVLASQHLTNNGTLLGLTYLELQAVNLTNSSAGKILSGQDLHFTTSHLQQNGQWTALRDLTGEIKGALDFSGAMAAGKQLSLQVDGDFNQRGNLQGNDVSITSRGVITNSGQLAAGSGSLALNGAAINQEQSGSLQSGGQISLTSRGDINNRGFVGAAGDLLLQAIGAVNNTSLLYAGGSMRLLADAIYNVRGDILAGNHLWMQRDNAGNSNREIINSSGNIETQQGDMVLNTASLLNRRDGFSVTEKTGAVNSGGIANVGATNILISSGYFKPGEVTHYSKTVTGGGHHGNVSTVNLLGLVPSARKQKLSTSSSIVTVDSPYDVGRIVAGRDINISANTLVNQASQMSAGRNALLQGQSLNNQSYQSGTLTQYLVYTNTRDTNPEYNLFEFKLSGSPTYEISNDGQLYQGVIQAVGSVSANFTQNLSNTSVKPNIGSIVHQVTQPSLTATTVPSELATKPNSGAAQVAPDSNNGDLVALYNQSGTALTFGLGTDGKPLTRAQLSDYPLPDSNNGLFVVNSEPGSRYLISTNPTLEKLGNVDSTLLSGLQAMLGRQPQTSVAIERNPQWTQQDNFLGSDYLLKKINLDAEHDYRFLGDAAFDTRYINNAVLSQTGQRYLNGVGSDLSQMQYLLDNAAQSQKKLDLKLGVSLTPEQVAQLSHSIVWWENINVNGQTVLAPKLYLAKAEQAHLQGSVISGNKVELNAGSVTNSGVLKGVELLAIASQDTITNEKGGLLTSEGALNLTALNNISNLSSSISGDRVAITSQNGDIINQTQTRQWSADQSRQPGYWSGIKTQSMTQTEVGETAAITAGKALTLAAGNNIAITGAKVTAAGDIGIQAAHDINIIANDLYSAQQQTLGRNRNIELNEQHESQSSHVSAGGTLTAHAGRDITLSASHLGADGNATLQAERDVNLLVQEKSTRNQHIDSEDKTTGYTRSTLSSGGDLTASAGRDINSQAAAVTAENTLALNAGRDINLNAQESRQYNESHGKNYKRVDEAIRQQGTELASGKGTQVHAGQDINLHAASISAKGDLALQAGRDIAVNSATESDYHFFEEKKTKKKLVSKTTIHNVEEDFATTEKSSALVGNNVSLSAGNNLIVKGSSVVGDGTVVLKADNNVDIVAATEQQSSYRLNEKKTSGMFSGGGLGVTLGSKSSRQQINQEGSKQSESASAVGSTAGNVSILAGAQAHISGSDVIAGKDLNVIAGTIKVDPGNDVLKRRQIYEQKQSGLTLSLSSPFTDALLAINSKLKQASDAGSDKLSALYGAQAAREAWVGVDGTMDMMASKPGGPAADPGASIKLQLSVGASHSKSTSELAQNQTRGSSLTAGDNLTMVASGDHEQSGDLSVVGSGVTGNKVTLVAKNDVLLAAASNNSEQTSRDSSSGWNAGVHLSLGKETGIGIAANGFMSKGNSDGKTTDYANARINAKEALAINSGRDTVLSGAQVLGDKITAEIGRDLTISSLQDSDNYNSIQKDASAGFSFTFGPSGGGSASFSLGKTKIESKYASVGDQSGFFAGSKGFDLNVGNHTQLNGGVLASTAGAQDNLLSTGTLGWGDIHNQAEYKATSTRIGYSTDAPMPTLGMANAHGSASGTTRSAVASGEIEIRNQGEQQQDVTTLSRDTDSANGRIDKIFDESKVKDQMAFTQGVTQLATQLVGDVSSWNMKQAERSAAEKLEKDPKYQNATREKRQEMIYASADYKAAQESFGIGSSFWTAGMAVSAALTGLAGNADIGSISSAAVAPYLAGQIKKYTTDKDDKVNKTINILAHAILGGIVAQMQGNSATAGALGGGGGELAARIYMDQVHPGKKVSDLSEADKKIVSAIGTLTAGILGGLSTDSSTGLITGAQAGKNAVEDNNLSFGKGMADIGMSQTSLGVSMLRNGTSPDEVSAALVKNSLGQTPEGQDPIRGLLTAWAEFFGVPVTALIANGPMTVERAAEIVSSGVPTSEAKLIQYTAAKAFLAVAKNLPQGTTLVSTPEGISFRIDQPKHLSSVDGFTQKAGISGGHNADAFYEAAKQYDVKILSETSTGAKGITEVKYQIPTKDRAGNLTGGYKPAVETKTIYDPNVFTDQKILELGQQAAAKGYKDAMASKSGQASATVDGVSFRIYVDKDTGRVRNFHPN.

An N-terminal signal peptide occupies residues 1-29 (MIPIYLRQKLISYALIYLVAIQPIMPVMA). The interval 35-320 (AQGSTALDKA…AQGNITLNSH (286 aa)) is two-partner system transport domain (TPS). The FHA-1 stretch occupies residues 573-1074 (GNVVAQEHAQ…MVLNTASLLN (502 aa)). The segment at 1075-1342 (RRDGFSVTEK…KPLTRAQLSD (268 aa)) is receptor binding domain (RBD). The YP domain stretch occupies residues 1343–1528 (YPLPDSNNGL…LAKAEQAHLQ (186 aa)). The periplasmic FHA-1 repeat (pFR) stretch occupies residues 1529–1751 (GSVISGNKVE…ATLQAERDVN (223 aa)). Residues 1759 to 1770 (TRNQHIDSEDKT) are compositionally biased toward basic and acidic residues. Disordered stretches follow at residues 1759–1787 (TRNQ…LTAS) and 1992–2012 (SKSS…SASA). Residues 1762–2314 (QHIDSEDKTT…DSDNYNSIQK (553 aa)) form an FHA-2 region. The segment covering 1771 to 1782 (TGYTRSTLSSGG) has biased composition (polar residues). A VEDN CT cleavage motif motif is present at residues 2694 to 2697 (VEDN). The segment at 2694–2963 (VEDNNLSFGK…TGRVRNFHPN (270 aa)) is C-terminal effector domain (CT).

It in the N-terminal section; belongs to the CdiA toxin family. In the C-terminal section; belongs to the bacterial EndoU family. Forms a 1:1 complex with cognate immunity protein CdiI.

The protein localises to the secreted. Its subcellular location is the target cell. The protein resides in the target cell cytoplasm. In terms of biological role, toxic component of a toxin-immunity protein module, which functions as a cellular contact-dependent growth inhibition (CDI) system. CDI modules allow bacteria to communicate with and inhibit the growth of closely related neighboring bacteria in a contact-dependent fashion. Targeting of the CT domain (residues 2824-2963) in the absence of immunity protein inhibits cell growth and causes tRNA(UUC-Glu) cleavage in the anticodon loop; expression of cognate immunity protein CdiI-43969 neutralizes growth inhibition and tRNA(UUC-Glu) remains intact, whereas non-cognate immunity proteins do not confer protection from the toxic effects. Its function is as follows. The CdiA protein is thought to be exported from the cell through the central lumen of CdiB, the other half of its two-partner system (TPS). The TPS domain probably remains associated with CdiB while the FHA-1 domain forms an extended filament with the receptor-binding domain (RBD) at its extremity; in the secretion arrested state the C-terminus of the RBD and YP domains form a hairpin-like structure as the FHA-2, PT and CT domains are periplasmic. The YP domain is probably responsible for this arrest at the point where it re-enters the host cell periplasm. Upon binding to a target cell outer membrane receptor a signal is transmitted to activate secretion. The filament elongates slightly, the rest of CdiA is secreted and the FHA-2 domain becomes stably associated with the target cell's outer membrane where it facilitates entry of the toxic CT domain into the target cell periplasm. From there the toxic CT domain is cleaved and gains access to the target cell cytoplasm via an inner membrane protein. This is tRNA nuclease CdiA from Yersinia mollaretii (strain ATCC 43969 / DSM 18520 / CIP 103324 / CNY 7263 / WAIP 204).